Consider the following 632-residue polypeptide: Golgin subfamily A member 8O (632 aa).

The tract at residues 1 to 76 (MAEETQHNKL…TSSATLKDLE (76 aa)) is disordered. Over residues 38 to 50 (TNGSIPETATSGG) the composition is skewed to polar residues. Coiled-coil stretches lie at residues 85–150 (VLDS…TDLY) and 209–421 (ELEQ…SLMA). Disordered stretches follow at residues 423 to 452 (PGEG…DPES), 505 to 524 (DAAL…DEGE), and 552 to 612 (NSAD…EHPG). Basic and acidic residues predominate over residues 427–440 (HGGEHLDSEGEEAP). Over residues 508–520 (LGGGHHQAGAQGG) the composition is skewed to gly residues. Positions 569–578 (AADKHGDLRE) are enriched in basic and acidic residues.

This sequence belongs to the GOLGA6 family.

The chain is Golgin subfamily A member 8O (GOLGA8O) from Homo sapiens (Human).